The primary structure comprises 91 residues: UPF0728 protein v1g117062 (91 aa).

This sequence belongs to the UPF0728 family.

The sequence is that of UPF0728 protein v1g117062 from Nematostella vectensis (Starlet sea anemone).